Consider the following 435-residue polypeptide: Asparagine--tRNA ligase (435 aa).

This sequence belongs to the class-II aminoacyl-tRNA synthetase family. In terms of assembly, homodimer.

It localises to the cytoplasm. It catalyses the reaction tRNA(Asn) + L-asparagine + ATP = L-asparaginyl-tRNA(Asn) + AMP + diphosphate + H(+). The chain is Asparagine--tRNA ligase from Leptospira interrogans serogroup Icterohaemorrhagiae serovar Lai (strain 56601).